Consider the following 164-residue polypeptide: Aspartate carbamoyltransferase regulatory chain (164 aa).

4 residues coordinate Zn(2+): cysteine 116, cysteine 121, cysteine 146, and cysteine 149.

The protein belongs to the PyrI family. Contains catalytic and regulatory chains. Zn(2+) serves as cofactor.

In terms of biological role, involved in allosteric regulation of aspartate carbamoyltransferase. In Staphylothermus marinus (strain ATCC 43588 / DSM 3639 / JCM 9404 / F1), this protein is Aspartate carbamoyltransferase regulatory chain.